We begin with the raw amino-acid sequence, 726 residues long: Uracil catabolism protein 2 (726 aa).

Positions 24–53 (CGVCRKFKTRCDFEPLVGKCHRCNVLRLEC) form a DNA-binding region, zn(2)-C6 fungal-type. Disordered stretches follow at residues 152–183 (AGMGDRNATYDDDDDGDDDGHDHSDSDNFVNG) and 629–681 (SGRL…SGAD). The segment covering 161-170 (YDDDDDGDDD) has biased composition (acidic residues). Polar residues predominate over residues 640–679 (RGSPSMTPGFQQSVQSSSALQGSKAGSPQSARSVNSQGSG).

Belongs to the URC2 family.

The protein localises to the nucleus. In terms of biological role, probable transcriptional activator involved in uracil catabolism. The polypeptide is Uracil catabolism protein 2 (URC2) (Lachancea kluyveri (Yeast)).